Here is a 142-residue protein sequence, read N- to C-terminus: Large-conductance mechanosensitive channel (142 aa).

The next 3 helical transmembrane spans lie at F10 to G30, L40 to V60, and G86 to V106.

This sequence belongs to the MscL family. As to quaternary structure, homopentamer.

It localises to the cell inner membrane. Functionally, channel that opens in response to stretch forces in the membrane lipid bilayer. May participate in the regulation of osmotic pressure changes within the cell. This chain is Large-conductance mechanosensitive channel, found in Delftia acidovorans (strain DSM 14801 / SPH-1).